We begin with the raw amino-acid sequence, 207 residues long: Vascular endothelial growth factor B (207 aa).

The N-terminal stretch at 1–21 is a signal peptide; it reads MSPLLRRLLLAVLLQLAPAQA. Intrachain disulfides connect Cys47/Cys89, Cys78/Cys122, and Cys82/Cys124. The segment covering 124–139 has biased composition (basic and acidic residues); that stretch reads CRPKKRESAVKPDRAS. Residues 124–207 are disordered; the sequence is CRPKKRESAV…AASSVVKGGA (84 aa). A compositionally biased stretch (low complexity) spans 174-201; it reads PSAHAAPSAASALTPGPATAAADAAASS.

The protein belongs to the PDGF/VEGF growth factor family. Homodimer; disulfide-linked. Can also form heterodimer with VEGF. VEGF-B186 is O-glycosylated.

The protein localises to the secreted. Functionally, growth factor for endothelial cells. VEGF-B167 binds heparin and neuropilin-1 whereas the binding to neuropilin-1 of VEGF-B186 is regulated by proteolysis. The protein is Vascular endothelial growth factor B (VEGFB) of Bos taurus (Bovine).